The following is a 263-amino-acid chain: ATP synthase subunit b 2 (263 aa).

The helical transmembrane segment at 2-22 (LIDPLTVVAQIINFLILVALL) threads the bilayer.

The protein belongs to the ATPase B chain family. F-type ATPases have 2 components, F(1) - the catalytic core - and F(0) - the membrane proton channel. F(1) has five subunits: alpha(3), beta(3), gamma(1), delta(1), epsilon(1). F(0) has four main subunits: a(1), b(1), b'(1) and c(10-14). The alpha and beta chains form an alternating ring which encloses part of the gamma chain. F(1) is attached to F(0) by a central stalk formed by the gamma and epsilon chains, while a peripheral stalk is formed by the delta, b and b' chains.

Its subcellular location is the cellular thylakoid membrane. Functionally, f(1)F(0) ATP synthase produces ATP from ADP in the presence of a proton or sodium gradient. F-type ATPases consist of two structural domains, F(1) containing the extramembraneous catalytic core and F(0) containing the membrane proton channel, linked together by a central stalk and a peripheral stalk. During catalysis, ATP synthesis in the catalytic domain of F(1) is coupled via a rotary mechanism of the central stalk subunits to proton translocation. Component of the F(0) channel, it forms part of the peripheral stalk, linking F(1) to F(0). In Acaryochloris marina (strain MBIC 11017), this protein is ATP synthase subunit b 2.